A 346-amino-acid chain; its full sequence is tRNA N6-adenosine threonylcarbamoyltransferase (346 aa).

Residues His-111 and His-115 each contribute to the Fe cation site. Substrate is bound by residues 134 to 138 (LVSGG), Asp-167, Gly-180, and Asn-277. Asp-305 contacts Fe cation.

The protein belongs to the KAE1 / TsaD family. Fe(2+) serves as cofactor.

The protein localises to the cytoplasm. The catalysed reaction is L-threonylcarbamoyladenylate + adenosine(37) in tRNA = N(6)-L-threonylcarbamoyladenosine(37) in tRNA + AMP + H(+). Functionally, required for the formation of a threonylcarbamoyl group on adenosine at position 37 (t(6)A37) in tRNAs that read codons beginning with adenine. Is involved in the transfer of the threonylcarbamoyl moiety of threonylcarbamoyl-AMP (TC-AMP) to the N6 group of A37, together with TsaE and TsaB. TsaD likely plays a direct catalytic role in this reaction. The protein is tRNA N6-adenosine threonylcarbamoyltransferase of Bordetella parapertussis (strain 12822 / ATCC BAA-587 / NCTC 13253).